Here is a 171-residue protein sequence, read N- to C-terminus: S-ribosylhomocysteine lyase (171 aa).

Positions 54, 58, and 128 each coordinate Fe cation.

It belongs to the LuxS family. In terms of assembly, homodimer. Fe cation serves as cofactor.

The catalysed reaction is S-(5-deoxy-D-ribos-5-yl)-L-homocysteine = (S)-4,5-dihydroxypentane-2,3-dione + L-homocysteine. Its function is as follows. Involved in the synthesis of autoinducer 2 (AI-2) which is secreted by bacteria and is used to communicate both the cell density and the metabolic potential of the environment. The regulation of gene expression in response to changes in cell density is called quorum sensing. Catalyzes the transformation of S-ribosylhomocysteine (RHC) to homocysteine (HC) and 4,5-dihydroxy-2,3-pentadione (DPD). The chain is S-ribosylhomocysteine lyase from Escherichia fergusonii (strain ATCC 35469 / DSM 13698 / CCUG 18766 / IAM 14443 / JCM 21226 / LMG 7866 / NBRC 102419 / NCTC 12128 / CDC 0568-73).